A 351-amino-acid polypeptide reads, in one-letter code: Nicotinate-nucleotide--dimethylbenzimidazole phosphoribosyltransferase (351 aa).

Glu-317 (proton acceptor) is an active-site residue.

This sequence belongs to the CobT family.

The enzyme catalyses 5,6-dimethylbenzimidazole + nicotinate beta-D-ribonucleotide = alpha-ribazole 5'-phosphate + nicotinate + H(+). Its pathway is nucleoside biosynthesis; alpha-ribazole biosynthesis; alpha-ribazole from 5,6-dimethylbenzimidazole: step 1/2. Catalyzes the synthesis of alpha-ribazole-5'-phosphate from nicotinate mononucleotide (NAMN) and 5,6-dimethylbenzimidazole (DMB). The sequence is that of Nicotinate-nucleotide--dimethylbenzimidazole phosphoribosyltransferase from Pseudomonas putida (strain GB-1).